A 90-amino-acid polypeptide reads, in one-letter code: Large ribosomal subunit protein eL34 (90 aa).

Residues 38–65 (ARCGRPLGGVPRGRPPRVRRLSKTAKRP) form a disordered region. Over residues 51 to 62 (RPPRVRRLSKTA) the composition is skewed to basic residues.

The protein belongs to the eukaryotic ribosomal protein eL34 family.

In Aeropyrum pernix (strain ATCC 700893 / DSM 11879 / JCM 9820 / NBRC 100138 / K1), this protein is Large ribosomal subunit protein eL34 (rpl34e).